Here is a 740-residue protein sequence, read N- to C-terminus: Alpha-1,6-mannosylglycoprotein 6-beta-N-acetylglucosaminyltransferase A (740 aa).

Over 1–13 (MAFFSPWKLSSQK) the chain is Cytoplasmic. The helical; Signal-anchor for type II membrane protein transmembrane segment at 14 to 30 (LGFFLVTFGFIWGMMLL) threads the bilayer. At 31–740 (HFTIQQRTQP…GQVALCKDCL (710 aa)) the chain is on the lumenal side. Asn-109, Asn-114, and Asn-117 each carry an N-linked (GlcNAc...) asparagine glycan. Intrachain disulfides connect Cys-144–Cys-182, Cys-155–Cys-195, Cys-171–Cys-337, Cys-371–Cys-625, Cys-648–Cys-723, Cys-652–Cys-725, Cys-659–Cys-712, Cys-680–Cys-701, and Cys-736–Cys-739. Residues 212–740 (NSLAEIRTDF…GQVALCKDCL (529 aa)) form a sufficient for catalytic activity region. The N-linked (GlcNAc...) asparagine glycan is linked to Asn-333. Residue 377 to 378 (DS) coordinates substrate. Asn-432 and Asn-446 each carry an N-linked (GlcNAc...) asparagine glycan. Residue Glu-525 participates in UDP-N-acetyl-alpha-D-glucosamine binding. Lys-553 lines the substrate pocket.

It belongs to the glycosyltransferase 18 family. In terms of processing, N-glycosylated. Post-translationally, a secreted form is released from the membrane after cleavage by gamma-secretase. In terms of tissue distribution, detected in cerebellum.

The protein localises to the golgi apparatus membrane. Its subcellular location is the perikaryon. The protein resides in the secreted. It catalyses the reaction N(4)-{beta-D-GlcNAc-(1-&gt;2)-[beta-D-GlcNAc-(1-&gt;4)]-alpha-D-Man-(1-&gt;3)-[beta-D-GlcNAc-(1-&gt;2)-alpha-D-Man-(1-&gt;6)]-beta-D-Man-(1-&gt;4)-beta-D-GlcNAc-(1-&gt;4)-beta-D-GlcNAc}-L-asparaginyl-[protein] + UDP-N-acetyl-alpha-D-glucosamine = N(4)-{beta-D-GlcNAc-(1-&gt;2)-[beta-D-GlcNAc-(1-&gt;4)]-alpha-D-Man-(1-&gt;3)-[beta-D-GlcNAc-(1-&gt;2)-[beta-D-GlcNAc-(1-&gt;6)]-alpha-D-Man-(1-&gt;6)]-beta-D-Man-(1-&gt;4)-beta-D-GlcNAc-(1-&gt;4)-beta-D-GlcNAc}-L-asparaginyl-[protein] + UDP + H(+). It functions in the pathway protein modification; protein glycosylation. Catalyzes the addition of N-acetylglucosamine (GlcNAc) in beta 1-6 linkage to the alpha-linked mannose of biantennary N-linked oligosaccharides. Catalyzes an important step in the biosynthesis of branched, complex-type N-glycans, such as those found on EGFR, TGFR (TGF-beta receptor) and CDH2. Via its role in the biosynthesis of complex N-glycans, plays an important role in the activation of cellular signaling pathways, reorganization of the actin cytoskeleton, cell-cell adhesion and cell migration. MGAT5-dependent EGFR N-glycosylation enhances the interaction between EGFR and LGALS3 and thereby prevents rapid EGFR endocytosis and prolongs EGFR signaling. Required for efficient interaction between TGFB1 and its receptor. Enhances activation of intracellular signaling pathways by several types of growth factors, including FGF2, PDGF, IGF, TGFB1 and EGF. MGAT5-dependent CDH2 N-glycosylation inhibits CDH2-mediated homotypic cell-cell adhesion and contributes to the regulation of downstream signaling pathways. Promotes cell migration. Contributes to the regulation of the inflammatory response. MGAT5-dependent TCR N-glycosylation enhances the interaction between TCR and LGALS3, limits agonist-induced TCR clustering, and thereby dampens TCR-mediated responses to antigens. Required for normal leukocyte evasation and accumulation at sites of inflammation. Inhibits attachment of monocytes to the vascular endothelium and subsequent monocyte diapedesis. Its function is as follows. Promotes proliferation of umbilical vein endothelial cells and angiogenesis, at least in part by promoting the release of the growth factor FGF2 from the extracellular matrix. The protein is Alpha-1,6-mannosylglycoprotein 6-beta-N-acetylglucosaminyltransferase A (Mgat5) of Mus musculus (Mouse).